Here is a 252-residue protein sequence, read N- to C-terminus: Phosphate import ATP-binding protein PstB 1 (252 aa).

An ABC transporter domain is found at leucine 6–isoleucine 247. Glycine 38–serine 45 contacts ATP.

The protein belongs to the ABC transporter superfamily. Phosphate importer (TC 3.A.1.7) family. The complex is composed of two ATP-binding proteins (PstB), two transmembrane proteins (PstC and PstA) and a solute-binding protein (PstS).

The protein localises to the cell membrane. The enzyme catalyses phosphate(out) + ATP + H2O = ADP + 2 phosphate(in) + H(+). Its function is as follows. Part of the ABC transporter complex PstSACB involved in phosphate import. Responsible for energy coupling to the transport system. The polypeptide is Phosphate import ATP-binding protein PstB 1 (Streptococcus mutans serotype c (strain ATCC 700610 / UA159)).